The following is a 178-amino-acid chain: Caveolin-1 (178 aa).

Ser2 is subject to N-acetylserine. Ser2 carries the phosphoserine modification. Residues 2–94 are required for homooligomerization; sequence SGGKYVDSEG…WKASFTTFTV (93 aa). Over 2-104 the chain is Cytoplasmic; sequence SGGKYVDSEG…TKYWFYRLLS (103 aa). Lys5 is subject to N6-acetyllysine; alternate. Lys5 is covalently cross-linked (Glycyl lysine isopeptide (Lys-Gly) (interchain with G-Cter in ubiquitin); alternate). Residue Tyr6 is modified to Phosphotyrosine. Position 9 is a phosphoserine (Ser9). The residue at position 14 (Tyr14) is a Phosphotyrosine; by ABL1. Tyr25 carries the post-translational modification Phosphotyrosine. Residues Lys26, Lys30, Lys39, Lys47, and Lys57 each participate in a glycyl lysine isopeptide (Lys-Gly) (interchain with G-Cter in ubiquitin) cross-link. An interaction with CAVIN3 region spans residues 82–94; it reads DGIWKASFTTFTV. The helical intramembrane region spans 105 to 125; the sequence is ALFGIPMALIWGIYFAILSFL. The Cytoplasmic segment spans residues 126–178; it reads HIWAVVPCIKSFLIEIQCISRVYSIYVHTFCDPLFEAIGKIFSNIRINMQKEI. The segment at 131 to 142 is interacts with SPRY1, SPRY2, SPRY3 and SPRY4; that stretch reads VPCIKSFLIEIQ. Residues Cys133, Cys143, and Cys156 are each lipidated (S-palmitoyl cysteine). The interacts with SPRY1, SPRY2, and SPRY4 stretch occupies residues 149–160; sequence SIYVHTFCDPLF. The segment at 167-178 is interacts with SPRY1, SPRY2, SPRY3 and SPRY4; the sequence is FSNIRINMQKEI.

Belongs to the caveolin family. Homooligomer. Interacts (via the N-terminus) with DPP4; the interaction is direct. Forms a stable heterooligomeric complex with CAV2 that targets to lipid rafts and drives caveolae formation. Interacts with PACSIN2; this interaction induces membrane tubulation. Interacts with BMX, BTK, CTNNB1, CDH1, GLIPR2, JUP, NOSTRIN, SNAP25 and STX1A. Interacts with SLC7A9. Interacts with TGFBR1. Interacts with CAVIN3 (via leucine-zipper domain) in a cholesterol-sensitive manner. Interacts with CAVIN1. Interacts with EHD2 in a cholesterol-dependent manner. Forms a ternary complex with UBXN6 and VCP; mediates CAV1 targeting to lysosomes for degradation. Interacts with ABCG1; this interaction regulates ABCG1-mediated cholesterol efflux. Interacts with NEU3; this interaction enhances NEU3 sialidase activity within caveola. Interacts (via C-terminus) with SPRY1, SPRY2 (via C-terminus), SPRY3, and SPRY4. In terms of processing, phosphorylated at Tyr-14 by ABL1 in response to oxidative stress. Ubiquitinated. Undergo monoubiquitination and multi- and/or polyubiquitination. Monoubiquitination of N-terminal lysines promotes integration in a ternary complex with UBXN6 and VCP which promotes oligomeric CAV1 targeting to lysosomes for degradation. Ubiquitinated by ZNRF1; leading to degradation and modulation of the TLR4-mediated immune response.

The protein localises to the golgi apparatus membrane. Its subcellular location is the cell membrane. It is found in the membrane. It localises to the caveola. The protein resides in the membrane raft. Functionally, may act as a scaffolding protein within caveolar membranes. Forms a stable heterooligomeric complex with CAV2 that targets to lipid rafts and drives caveolae formation. Mediates the recruitment of CAVIN proteins (CAVIN1/2/3/4) to the caveolae. Interacts directly with G-protein alpha subunits and can functionally regulate their activity. Involved in the costimulatory signal essential for T-cell receptor (TCR)-mediated T-cell activation. Its binding to DPP4 induces T-cell proliferation and NF-kappa-B activation in a T-cell receptor/CD3-dependent manner. Recruits CTNNB1 to caveolar membranes and may regulate CTNNB1-mediated signaling through the Wnt pathway. Negatively regulates TGFB1-mediated activation of SMAD2/3 by mediating the internalization of TGFBR1 from membrane rafts leading to its subsequent degradation. Binds 20(S)-hydroxycholesterol (20(S)-OHC). The sequence is that of Caveolin-1 (CAV1) from Otolemur garnettii (Small-eared galago).